Here is an 87-residue protein sequence, read N- to C-terminus: Apoptosis inducing factor BLCAP B (87 aa).

2 helical membrane-spanning segments follow: residues 19–39 (PALW…FLLE) and 43–63 (CTIC…SCWG).

It belongs to the BLCAP family.

The protein resides in the cytoplasm. It localises to the nucleus. The protein localises to the membrane. Its function is as follows. Acts as a tumor suppressor; induces growth arrest at G(1)/S checkpoint and apoptosis via RB1-dependent and p53/TP53- and NF-kappa-B-independent mechanisms. Modulates expression of genes involved in the regulation of proliferation, cell cycle and apoptosis. The chain is Apoptosis inducing factor BLCAP B (blcap-b) from Xenopus laevis (African clawed frog).